The following is a 371-amino-acid chain: N-methyl-L-tryptophan oxidase (371 aa).

Position 4–34 (4–34 (DLIVIGSGSVGSAAGYYASQAGLNVLMIDSA)) interacts with FAD. Cys307 bears the S-8alpha-FAD cysteine mark.

Belongs to the MSOX/MTOX family. MTOX subfamily. In terms of assembly, monomer. The cofactor is FAD.

The enzyme catalyses N(alpha)-methyl-L-tryptophan + O2 + H2O = L-tryptophan + formaldehyde + H2O2. Its function is as follows. Catalyzes the oxidative demethylation of N-methyl-L-tryptophan. In Yersinia pseudotuberculosis serotype O:1b (strain IP 31758), this protein is N-methyl-L-tryptophan oxidase.